Here is a 1148-residue protein sequence, read N- to C-terminus: Envelopment polyprotein (1148 aa).

An N-terminal signal peptide occupies residues 1–23; that stretch reads MGELSPVCLYLLLQGLLLCNTGA. At 24 to 495 the chain is on the lumenal side; that stretch reads ARNLNELKME…VPGLHGWATM (472 aa). Cystine bridges form between cysteine 34-cysteine 159, cysteine 68-cysteine 165, cysteine 117-cysteine 136, cysteine 141-cysteine 146, cysteine 183-cysteine 193, and cysteine 218-cysteine 257. A glycan (N-linked (GlcNAc...) asparagine; by host) is linked at asparagine 142. The N-linked (GlcNAc...) asparagine; by host glycan is linked to asparagine 357. Cystine bridges form between cysteine 386/cysteine 445, cysteine 390/cysteine 399, cysteine 415/cysteine 434, and cysteine 462/cysteine 485. Asparagine 409 carries an N-linked (GlcNAc...) asparagine; by host glycan. Residues 496-516 traverse the membrane as a helical segment; it reads LLLLTFCFGWVLIPTITMILL. At 517-637 the chain is on the cytoplasmic side; that stretch reads KILIAFAYLC…LSLFRYRSRF (121 aa). The tract at residues 526–543 is binding to the ribonucleoprotein; sequence CSKYNTDSKFRILIEKVK. CCHC-type zinc fingers lie at residues 555–575 and 580–601; these read CEVC…RKSC and CPYC…FKVC. Binding to the ribonucleoprotein regions lie at residues 598 to 615, 602 to 613, and 621 to 635; these read FKVC…RKSL, KLRSRFQENLRK, and MQGC…RYRS. In terms of domain architecture, ITAM spans 621–644; the sequence is MQGCYRTLSLFRYRSRFFVGLVWC. Residues 625-628 carry the YxxL motif; that stretch reads YRTL. Residues 638–658 traverse the membrane as a helical segment; it reads FVGLVWCVLLVHHLIVWAASA. Over 659 to 1114 the chain is Lumenal; sequence ETQNLNAGWT…EWILGVLNGN (456 aa). 8 disulfide bridges follow: cysteine 745/cysteine 780, cysteine 749/cysteine 787, cysteine 761/cysteine 894, cysteine 775/cysteine 905, cysteine 790/cysteine 913, cysteine 816/cysteine 825, cysteine 833/cysteine 842, and cysteine 873/cysteine 877. The segment at 767–787 is fusion loop; that stretch reads YEYETGWGCNPPDCPGVGTGC. Residue asparagine 937 is glycosylated (N-linked (GlcNAc...) asparagine; by host). Cystine bridges form between cysteine 979-cysteine 1009, cysteine 1002-cysteine 1054, cysteine 1019-cysteine 1024, cysteine 1055-cysteine 1060, and cysteine 1094-cysteine 1098. The chain crosses the membrane as a helical span at residues 1115–1135; the sequence is WMVVAVLVVLLILSILLFTLC. 2 binding to the ribonucleoprotein regions span residues 1131-1143 and 1131-1148; these read LFTL…PSYR and LFTL…EHKP. Residues 1136 to 1148 are Cytoplasmic-facing; the sequence is CPRRPSYRKEHKP.

It belongs to the hantavirus envelope glycoprotein family. In terms of assembly, homodimer. Homotetramer; forms heterotetrameric Gn-Gc spikes in the pre-fusion conformation. Interacts (via C-terminus) with the nucleoprotein. Interacts with host TUFM; this interaction contributes to the virus-induced degradation of mitochondria by autophagy, which leads to degradation of host MAVS and inhibition of type I interferon (IFN) responses. Interacts with host MAP1LC3B; this interaction contributes to the virus-induced degradation of mitochondria by autophagy, which leads to degradation of host MAVS and inhibition of type I interferon (IFN) responses. Homodimer. Homotetramer; forms heterotetrameric Gn-Gc spikes in the pre-fusion conformation. Homotrimer; forms homotrimer in the post-fusion conformation at acidic pH. Interacts (via C-terminus) with the nucleoprotein. In terms of processing, envelope polyprotein precursor is quickly cleaved in vivo just after synthesis, presumably by host signal peptidase.

The protein resides in the virion membrane. It is found in the host cell surface. The protein localises to the host Golgi apparatus membrane. Its subcellular location is the host endoplasmic reticulum membrane. It localises to the host mitochondrion. Its function is as follows. Forms homotetramers with glycoprotein C at the surface of the virion. Attaches the virion to host cell receptors including integrin ITGAV/ITGB3. This attachment induces virion internalization predominantly through clathrin-dependent endocytosis. Mediates the assembly and budding of infectious virus particles through its interaction with the nucleocapsid protein and the viral genome. May dysregulate normal immune and endothelial cell responses through an ITAM motif. Translocates to mitochondria, binds to host TUFM and recruits MAP1LC3B. These interactions induce mitochondrial autophagy and therefore destruction of host MAVS leading to inhibition of type I interferon (IFN) responses. Concomitant breakdown of glycoprotein N is apparently prevented by the nucleoprotein that may inhibit Gn-stimulated autophagosome-lysosome fusion. Interacts with the viral genomic RNA. Forms homotetramers with glycoprotein N at the surface of the virion. Attaches the virion to host cell receptors including integrin ITGAV/ITGB3. This attachment induces virion internalization predominantly through clathrin-dependent endocytosis. Class II fusion protein that promotes fusion of viral membrane with host endosomal membrane after endocytosis of the virion. The sequence is that of Envelopment polyprotein (GP) from Homo sapiens (Human).